Reading from the N-terminus, the 413-residue chain is Hemolin (413 aa).

Residues 1-19 (MAFKSIAVLSACIIVGSAL) form the signal peptide. Ig-like C2-type domains follow at residues 25–112 (PVLK…RVIS), 122–211 (PAKT…EEVV), 233–322 (PQYV…LKLT), and 327–413 (PKYE…VQVN). 4 disulfide bridges follow: cysteine 46-cysteine 97, cysteine 140-cysteine 199, cysteine 252-cysteine 305, and cysteine 349-cysteine 395. Asparagine 283 carries N-linked (GlcNAc...) asparagine glycosylation.

The protein belongs to the hemolin family. Hemolymph.

The protein resides in the secreted. It localises to the extracellular space. Functionally, insect-immune protein. Forms a protein complex at the bacterial surface. Can inhibit hemocyte aggregation. In Hyalophora cecropia (Cecropia moth), this protein is Hemolin.